A 494-amino-acid polypeptide reads, in one-letter code: Alpha-amylase A (494 aa).

An N-terminal signal peptide occupies residues methionine 1 to alanine 18. Residue glutamine 19 is modified to Pyrrolidone carboxylic acid. An intrachain disulfide couples cysteine 46 to cysteine 102. 3 residues coordinate Ca(2+): asparagine 116, arginine 165, and aspartate 174. A disulfide bond links cysteine 153 and cysteine 167. Position 202 (arginine 202) interacts with chloride. The Nucleophile role is filled by aspartate 204. Position 208 (histidine 208) interacts with Ca(2+). Glutamate 241 serves as the catalytic Proton donor. 2 residues coordinate chloride: asparagine 304 and arginine 343. 2 disulfides stabilise this stretch: cysteine 376/cysteine 382 and cysteine 448/cysteine 460.

The protein belongs to the glycosyl hydrolase 13 family. Monomer. Ca(2+) serves as cofactor. Chloride is required as a cofactor.

It catalyses the reaction Endohydrolysis of (1-&gt;4)-alpha-D-glucosidic linkages in polysaccharides containing three or more (1-&gt;4)-alpha-linked D-glucose units.. The chain is Alpha-amylase A (Amy-p) from Drosophila melanogaster (Fruit fly).